The primary structure comprises 23 residues: Acidic phospholipase A2 Ts-A5 (23 aa).

Requires Ca(2+) as cofactor. In terms of processing, contains 7 disulfide bonds. As to expression, expressed by the venom gland.

It localises to the secreted. It catalyses the reaction a 1,2-diacyl-sn-glycero-3-phosphocholine + H2O = a 1-acyl-sn-glycero-3-phosphocholine + a fatty acid + H(+). Its function is as follows. Snake venom phospholipase A2 (PLA2) that shows a moderate inhibition of ADP-induced human platelet aggregation when tested on platelet rich plasma. Exhibits high hydrolytic activities and prefers the anionic micelles (dPPC with deoxycholate) to the zwitterionic micelles (dPPC with Triton X-100). PLA2 catalyzes the calcium-dependent hydrolysis of the 2-acyl groups in 3-sn-phosphoglycerides. This Trimeresurus stejnegeri (Chinese green tree viper) protein is Acidic phospholipase A2 Ts-A5.